A 264-amino-acid chain; its full sequence is B3-hordein (264 aa).

The segment covering 1 to 15 (QQPVSRQPQQIIPQQ) has biased composition (low complexity). A disordered region spans residues 1-66 (QQPVSRQPQQ…QQPFPQQPPF (66 aa)). Pro residues-rich tracts occupy residues 16 to 44 (PQQPFPLQPQQPQPFPQQPIPQQPQPYPQ) and 52 to 64 (QPFPSQQPFPQQP).

This sequence belongs to the gliadin/glutenin family. In terms of tissue distribution, developing endosperm.

Its function is as follows. Sulfur-rich seed storage protein. The protein is B3-hordein of Hordeum vulgare (Barley).